Reading from the N-terminus, the 79-residue chain is Sec-independent protein translocase protein TatA (79 aa).

Residues 1–21 (MGSLSIWHWLIVLLIVALVFG) form a helical membrane-spanning segment. The segment at 46–79 (ADAPAAEAQQRELPRNGAVDVEAKEKTPRSGDYR) is disordered. Over residues 66 to 79 (VEAKEKTPRSGDYR) the composition is skewed to basic and acidic residues.

This sequence belongs to the TatA/E family. The Tat system comprises two distinct complexes: a TatABC complex, containing multiple copies of TatA, TatB and TatC subunits, and a separate TatA complex, containing only TatA subunits. Substrates initially bind to the TatABC complex, which probably triggers association of the separate TatA complex to form the active translocon.

The protein resides in the cell inner membrane. Its function is as follows. Part of the twin-arginine translocation (Tat) system that transports large folded proteins containing a characteristic twin-arginine motif in their signal peptide across membranes. TatA could form the protein-conducting channel of the Tat system. This Paraburkholderia phytofirmans (strain DSM 17436 / LMG 22146 / PsJN) (Burkholderia phytofirmans) protein is Sec-independent protein translocase protein TatA.